The following is a 342-amino-acid chain: Alpha-(1,3)-fucosyltransferase 7 (342 aa).

Over 1 to 14 the chain is Cytoplasmic; it reads MNNAGHGPTRRLRG. A helical; Signal-anchor for type II membrane protein transmembrane segment spans residues 15-36; sequence LGVLAGVALLAALWLLWLLGSA. The Lumenal segment spans residues 37–342; sequence PRGTPAPQPT…YEDLEGWFQA (306 aa). The cysteines at positions 68 and 76 are disulfide-linked. N-linked (GlcNAc...) asparagine glycosylation occurs at Asn81. A disulfide bridge links Cys211 with Cys214. Asn291 carries N-linked (GlcNAc...) asparagine glycosylation. Cys318 and Cys321 are disulfide-bonded.

This sequence belongs to the glycosyltransferase 10 family. N-glycosylated. In terms of tissue distribution, leukocytic/myeloid lineage cells.

Its subcellular location is the golgi apparatus. It is found in the golgi stack membrane. It catalyses the reaction an N-acetyl-alpha-neuraminyl-(2-&gt;3)-beta-D-galactosyl-(1-&gt;4)-N-acetyl-beta-D-glucosaminyl derivative + GDP-beta-L-fucose = an alpha-Neu5Ac-(2-&gt;3)-beta-D-Gal-(1-&gt;4)-[alpha-L-Fuc-(1-&gt;3)]-beta-D-GlcNAc derivative + GDP + H(+). The enzyme catalyses a neolactoside IV(3)-alpha-NeuAc-nLc4Cer + GDP-beta-L-fucose = a neolactoside IV(3)-alpha-NeuNAc,III(3)-alpha-Fuc-nLc4Cer + GDP + H(+). The catalysed reaction is a neolactoside VI(3)-alpha-NeuNAc-nLc6Cer + GDP-beta-L-fucose = a neolactoside VI(3)-alpha-NeuAc,V(3)-alphaFuc-nLc6Cer + GDP + H(+). It carries out the reaction an alpha-Neu5Ac-(2-&gt;3)-beta-D-Gal-(1-&gt;4)-beta-D-GlcNAc-(1-&gt;3)-beta-D-Gal-(1-&gt;4)-[alpha-L-Fuc-(1-&gt;3)]-beta-D-GlcNAc derivative + GDP-beta-L-fucose = an alpha-Neu5Ac-(2-&gt;3)-beta-D-Gal-(1-&gt;4)-[alpha-L-Fuc-(1-&gt;3)]-beta-D-GlcNAc-(1-&gt;3)-beta-D-Gal-(1-&gt;4)-[alpha-L-Fuc-(1-&gt;3)]-beta-D-GlcNAc derivative + GDP + H(+). It catalyses the reaction an alpha-Neu5Ac-(2-&gt;3)-beta-D-Gal-(1-&gt;4)-beta-D-GlcNAc6S derivative + GDP-beta-L-fucose = an alpha-Neu5Ac-(2-&gt;3)-beta-D-Gal-(1-&gt;4)-[alpha-L-Fuc-(1-&gt;3)]-beta-D-GlcNAc6S derivative + GDP + H(+). The enzyme catalyses alpha-Neu5Ac-(2-&gt;3)-beta-D-Gal-(1-&gt;4)-beta-D-GlcNAc-(1-&gt;3)-beta-D-Gal-(1-&gt;4)-D-Glc + GDP-beta-L-fucose = alpha-Neu5Ac-(2-&gt;3)-beta-D-Gal-(1-&gt;4)-[alpha-L-Fuc-(1-&gt;3)]-beta-D-GlcNAc-(1-&gt;3)-beta-D-Gal-(1-&gt;4)-D-Glc + GDP + H(+). The catalysed reaction is alpha-Neu5Ac-(2-&gt;3)-beta-D-Gal-(1-&gt;4)-beta-D-GlcNAc-(1-&gt;3)-beta-D-Gal-(1-&gt;4)-[alpha-L-Fuc-(1-&gt;3)]-beta-D-GlcNAc-(1-&gt;3)-beta-D-Gal-(1-&gt;4)-beta-D-GlcNAc + GDP-beta-L-fucose = alpha-Neu5Ac-(2-&gt;3)-beta-D-Gal-(1-&gt;4)-[alpha-L-Fuc-(1-&gt;3)]-beta-D-GlcNAc-(1-&gt;3)-beta-D-Gal-(1-&gt;4)-[alpha-L-Fuc-(1-&gt;3)]-beta-D-GlcNAc-(1-&gt;3)-beta-D-Gal-(1-&gt;4)-beta-D-GlcNAc + GDP + H(+). It carries out the reaction alpha-Neu5Ac-(2-&gt;3)-beta-D-Gal-(1-&gt;4)-beta-D-GlcNAc-(1-&gt;3)-beta-D-Gal-(1-&gt;4)-beta-D-GlcNAc-(1-&gt;3)-beta-D-Gal-(1-&gt;4)-beta-D-GlcNAc + GDP-beta-L-fucose = alpha-Neu5Ac-(2-&gt;3)-beta-D-Gal-(1-&gt;4)-[alpha-L-Fuc-(1-&gt;3)]-beta-D-GlcNAc-(1-&gt;3)-beta-D-Gal-(1-&gt;4)-beta-D-GlcNAc-(1-&gt;3)-beta-D-Gal-(1-&gt;4)-beta-D-GlcNAc + GDP + H(+). It functions in the pathway protein modification; protein glycosylation. With respect to regulation, inhibited by NaCl. Inhibited by GDP in a concentration dependent manner, with an IC(50) value of 93 uM. Also inhibited by GMP and GTP. Inhibited by N-ethylmaleimide. Activated by poly(ethylene glycol) by enhancing the thermal stability of FUT7. Activated by Mn2+, Ca2+, and Mg2+. Both panosialin A and B inhibit activity with IC(50) values of 4.8 and 5.3 ug/ml, respectively. Inhibited by gallic acid (GA) and (-)-epigallocatechin gallate (EGCG) in a time-dependent and irreversible manner with IC(50) values of 60 and 700 nM, respectively. Catalyzes the transfer of L-fucose, from a guanosine diphosphate-beta-L-fucose, to the N-acetyl glucosamine (GlcNAc) of a distal alpha2,3 sialylated lactosamine unit of a glycoprotein or a glycolipid-linked sialopolylactosamines chain through an alpha-1,3 glycosidic linkage and participates in the final fucosylation step in the biosynthesis of the sialyl Lewis X (sLe(x)), a carbohydrate involved in cell and matrix adhesion during leukocyte trafficking and fertilization. In vitro, also synthesizes sialyl-dimeric-Lex structures, from VIM-2 structures and both di-fucosylated and trifucosylated structures from mono-fucosylated precursors. However does not catalyze alpha 1-3 fucosylation when an internal alpha 1-3 fucosylation is present in polylactosamine chain and the fucosylation rate of the internal GlcNAc residues is reduced once fucose has been added to the distal GlcNAc. Also catalyzes the transfer of a fucose from GDP-beta-fucose to the 6-sulfated a(2,3)sialylated substrate to produce 6-sulfo sLex mediating significant L-selectin-dependent cell adhesion. Through sialyl-Lewis(x) biosynthesis, can control SELE- and SELP-mediated cell adhesion with leukocytes and allows leukocytes tethering and rolling along the endothelial tissue thereby enabling the leukocytes to accumulate at a site of inflammation. May enhance embryo implantation through sialyl Lewis X (sLeX)-mediated adhesion of embryo cells to endometrium. May affect insulin signaling by up-regulating the phosphorylation and expression of some signaling molecules involved in the insulin-signaling pathway through SLe(x) which is present on the glycans of the INSRR alpha subunit. The sequence is that of Alpha-(1,3)-fucosyltransferase 7 from Homo sapiens (Human).